Consider the following 337-residue polypeptide: Fructose-1,6-bisphosphatase class 1 (337 aa).

Glutamate 89, aspartate 112, leucine 114, and aspartate 115 together coordinate Mg(2+). Substrate is bound by residues 115–118 (DGSS), asparagine 208, tyrosine 241, and lysine 271. A Mg(2+)-binding site is contributed by glutamate 277.

This sequence belongs to the FBPase class 1 family. As to quaternary structure, homotetramer. Requires Mg(2+) as cofactor.

It is found in the cytoplasm. The enzyme catalyses beta-D-fructose 1,6-bisphosphate + H2O = beta-D-fructose 6-phosphate + phosphate. It functions in the pathway carbohydrate biosynthesis; gluconeogenesis. This is Fructose-1,6-bisphosphatase class 1 from Yersinia pseudotuberculosis serotype O:1b (strain IP 31758).